The chain runs to 409 residues: Fructose-1,6-bisphosphatase, chloroplastic (409 aa).

A chloroplast-targeting transit peptide spans 1 to 49; it reads MAAATTTTSRPLLLSRQQAAASSLQCRLPRRPGSSLFAGQGQASTPNVR. Positions 131, 160, 181, 183, and 184 each coordinate Mg(2+). 184–187 provides a ligand contact to substrate; that stretch reads DGSS. Cys223 and Cys228 are oxidised to a cystine. 5 residues coordinate substrate: Asn287, Tyr319, Tyr337, Tyr339, and Lys349. Glu355 contacts Mg(2+).

It belongs to the FBPase class 1 family. In terms of assembly, homotetramer. The cofactor is Mg(2+). As to expression, in photosynthetically active tissues, and in the shoot and root apical meristems.

The protein localises to the plastid. It is found in the chloroplast. The catalysed reaction is beta-D-fructose 1,6-bisphosphate + H2O = beta-D-fructose 6-phosphate + phosphate. Its pathway is carbohydrate biosynthesis; Calvin cycle. In Triticum aestivum (Wheat), this protein is Fructose-1,6-bisphosphatase, chloroplastic (FBP).